The chain runs to 503 residues: MTDKKYIIALDQGTTSSRAVLLDHNANVVEIAQREFTQIYPRAGWVEHNPMEIWATQSSTLNEVVAKAGITSDEIAAIGITNQRETTIVWEKSTGTPVYNAIVWQCRRTADITDKLKADGHEEYIRNTTGLVVDPYFSGTKVKWILDNVEGAREKAERGELLFGTVDTWLVWKLTQGRVHVTDYTNASRTMLFNIHTKQWDDKMLEILNIPRSILPEVRNSSEIYGQTNIGGKGGVRIPVAGIAGDQQAALYGHLCVHAGQAKNTYGTGCFMLLHTGNKAITSKNGLLTTIACNAKGEPEYALEGSVFIAGASIQWLRDELKIVHDSFDSEYFAQKVTDSNGVYVVPAFTGLGAPYWDPYARGAIFGLSRGANCNHIVRATLQSIAYQTRDVLEAMQSDSGERLQYLRVDGGATNNNFLMQFQADILDVNVERPVVKEVTALGAAYLAGLATGFWKDLDELRDKARVERTFSPDSDNEKRERRYKGWKKAVKRSLEWAKEDEE.

T14 provides a ligand contact to ADP. Residues T14, T15, and S16 each contribute to the ATP site. T14 contributes to the sn-glycerol 3-phosphate binding site. Residue R18 coordinates ADP. The sn-glycerol 3-phosphate site is built by R84, E85, Y136, and D246. Positions 84, 85, 136, 246, and 247 each coordinate glycerol. Positions 268 and 311 each coordinate ADP. 4 residues coordinate ATP: T268, G311, Q315, and G412. Residues G412 and N416 each contribute to the ADP site.

This sequence belongs to the FGGY kinase family.

It catalyses the reaction glycerol + ATP = sn-glycerol 3-phosphate + ADP + H(+). The protein operates within polyol metabolism; glycerol degradation via glycerol kinase pathway; sn-glycerol 3-phosphate from glycerol: step 1/1. With respect to regulation, inhibited by fructose 1,6-bisphosphate (FBP). Functionally, key enzyme in the regulation of glycerol uptake and metabolism. Catalyzes the phosphorylation of glycerol to yield sn-glycerol 3-phosphate. The sequence is that of Glycerol kinase from Haemophilus influenzae (strain PittEE).